Here is a 379-residue protein sequence, read N- to C-terminus: Succinate--CoA ligase [ADP-forming] subunit beta (379 aa).

Positions 9-235 (KEIAKNNGIP…GRELSEMEAI (227 aa)) constitute an ATP-grasp domain. ATP-binding residues include Lys-45, Glu-91, Ile-94, and Glu-99. Asn-191 and Asp-205 together coordinate Mg(2+). Substrate is bound by residues Asn-255 and 312-314 (GIT).

The protein belongs to the succinate/malate CoA ligase beta subunit family. As to quaternary structure, heterotetramer of two alpha and two beta subunits. Mg(2+) serves as cofactor.

It carries out the reaction succinate + ATP + CoA = succinyl-CoA + ADP + phosphate. The catalysed reaction is GTP + succinate + CoA = succinyl-CoA + GDP + phosphate. It functions in the pathway carbohydrate metabolism; tricarboxylic acid cycle; succinate from succinyl-CoA (ligase route): step 1/1. Functionally, succinyl-CoA synthetase functions in the citric acid cycle (TCA), coupling the hydrolysis of succinyl-CoA to the synthesis of either ATP or GTP and thus represents the only step of substrate-level phosphorylation in the TCA. The beta subunit provides nucleotide specificity of the enzyme and binds the substrate succinate, while the binding sites for coenzyme A and phosphate are found in the alpha subunit. The sequence is that of Succinate--CoA ligase [ADP-forming] subunit beta from Staphylothermus marinus (strain ATCC 43588 / DSM 3639 / JCM 9404 / F1).